Consider the following 202-residue polypeptide: Ras-related protein Rab-18 (202 aa).

12 residues coordinate GTP: Ser-20, Gly-23, Lys-24, Ser-25, Ser-26, Asp-37, Pro-38, Thr-43, Gly-69, Lys-126, Asp-128, and Ala-155. Residues 40–48 (QAATIGVDF) carry the Effector region motif. A disordered region spans residues 183-202 (RPTFRLGQPTDTSSGNLCGC). Over residues 191–202 (PTDTSSGNLCGC) the composition is skewed to polar residues. Residues Cys-200 and Cys-202 are each lipidated (S-geranylgeranyl cysteine). A Cysteine methyl ester modification is found at Cys-202.

This sequence belongs to the small GTPase superfamily. Rab family.

It catalyses the reaction GTP + H2O = GDP + phosphate + H(+). The small GTPases Rab are key regulators of intracellular membrane trafficking, from the formation of transport vesicles to their fusion with membranes. Rabs cycle between an inactive GDP-bound form and an active GTP-bound form that is able to recruit to membranes different sets of downstream effectors directly responsible for vesicle formation, movement, tethering and fusion. Plays a role in apical endocytosis/recycling. May be implicated in transport between the plasma membrane and early endosomes. This chain is Ras-related protein Rab-18 (rab-18), found in Caenorhabditis briggsae.